The primary structure comprises 336 residues: Protein RecA (336 aa).

G66 to T73 is a binding site for ATP.

The protein belongs to the RecA family.

The protein localises to the cytoplasm. Can catalyze the hydrolysis of ATP in the presence of single-stranded DNA, the ATP-dependent uptake of single-stranded DNA by duplex DNA, and the ATP-dependent hybridization of homologous single-stranded DNAs. It interacts with LexA causing its activation and leading to its autocatalytic cleavage. In Mycoplasma pneumoniae (strain ATCC 29342 / M129 / Subtype 1) (Mycoplasmoides pneumoniae), this protein is Protein RecA.